Here is an 882-residue protein sequence, read N- to C-terminus: Alanine--tRNA ligase (882 aa).

Zn(2+) contacts are provided by H570, H574, C672, and H676.

The protein belongs to the class-II aminoacyl-tRNA synthetase family. Requires Zn(2+) as cofactor.

It localises to the cytoplasm. It catalyses the reaction tRNA(Ala) + L-alanine + ATP = L-alanyl-tRNA(Ala) + AMP + diphosphate. Functionally, catalyzes the attachment of alanine to tRNA(Ala) in a two-step reaction: alanine is first activated by ATP to form Ala-AMP and then transferred to the acceptor end of tRNA(Ala). Also edits incorrectly charged Ser-tRNA(Ala) and Gly-tRNA(Ala) via its editing domain. The chain is Alanine--tRNA ligase from Xanthomonas campestris pv. campestris (strain ATCC 33913 / DSM 3586 / NCPPB 528 / LMG 568 / P 25).